The primary structure comprises 662 residues: Acetyl-coenzyme A synthetase (662 aa).

CoA is bound by residues 197-200 and Thr317; that span reads RKGK. Residues 393–395, 417–422, Asp510, and Arg525 contribute to the ATP site; these read GEP and DTWWQT. Ser533 contributes to the CoA binding site. ATP is bound at residue Arg536. Mg(2+) is bound by residues His549 and Val552. At Lys623 the chain carries N6-acetyllysine.

Belongs to the ATP-dependent AMP-binding enzyme family. Requires Mg(2+) as cofactor. In terms of processing, acetylated. Deacetylation by the SIR2-homolog deacetylase activates the enzyme.

It carries out the reaction acetate + ATP + CoA = acetyl-CoA + AMP + diphosphate. In terms of biological role, catalyzes the conversion of acetate into acetyl-CoA (AcCoA), an essential intermediate at the junction of anabolic and catabolic pathways. AcsA undergoes a two-step reaction. In the first half reaction, AcsA combines acetate with ATP to form acetyl-adenylate (AcAMP) intermediate. In the second half reaction, it can then transfer the acetyl group from AcAMP to the sulfhydryl group of CoA, forming the product AcCoA. The sequence is that of Acetyl-coenzyme A synthetase from Helicobacter acinonychis (strain Sheeba).